We begin with the raw amino-acid sequence, 298 residues long: Protoheme IX farnesyltransferase (298 aa).

The next 9 helical transmembrane spans lie at 16 to 36 (VVAL…PDMP), 45 to 65 (ALGF…NQLL), 93 to 113 (VFAG…VNVI), 114 to 134 (TAVL…VYLK), 141 to 161 (IVIG…AVTG), 172 to 192 (SLLV…LAIF), 223 to 243 (VLLA…VFYL), 244 to 264 (GGAV…LNPP), and 277 to 297 (IVYL…LPWV).

This sequence belongs to the UbiA prenyltransferase family. Protoheme IX farnesyltransferase subfamily.

The protein resides in the cell inner membrane. It catalyses the reaction heme b + (2E,6E)-farnesyl diphosphate + H2O = Fe(II)-heme o + diphosphate. It functions in the pathway porphyrin-containing compound metabolism; heme O biosynthesis; heme O from protoheme: step 1/1. In terms of biological role, converts heme B (protoheme IX) to heme O by substitution of the vinyl group on carbon 2 of heme B porphyrin ring with a hydroxyethyl farnesyl side group. The sequence is that of Protoheme IX farnesyltransferase from Xanthomonas oryzae pv. oryzae (strain MAFF 311018).